The primary structure comprises 493 residues: Transcript termination protein A18 (493 aa).

The region spanning 100-256 is the Helicase ATP-binding domain; the sequence is MIELKRPLYI…NSIINIAKLS (157 aa). Position 113–120 (113–120) interacts with ATP; sequence LACGFGKT. The DESH box signature appears at 206–209; the sequence is DESH.

The protein belongs to the helicase family. Poxviruses subfamily. Interacts with G2. Might be part of a transcription complex composed at least of G2, A18, and H5.

Its subcellular location is the virion. DNA helicase which seems to act as a postreplicative transcription termination factor. Involved in ATP-dependent release of nascent RNA. Forms a stable complex with single-stranded DNA, and to a lesser extent RNA. The chain is Transcript termination protein A18 from Camelus.